We begin with the raw amino-acid sequence, 3083 residues long: Laminin subunit alpha-1 (3083 aa).

The N-terminal stretch at 1–24 (MRGSGTGAALLVLLASVLWVTVRS) is a signal peptide. Gln-25 carries the post-translational modification Pyrrolidone carboxylic acid. The Laminin N-terminal domain maps to 25 to 276 (QQRGLFPAIL…SIKDISVGGM (252 aa)). Intrachain disulfides connect Cys-277-Cys-286, Cys-279-Cys-297, Cys-299-Cys-308, Cys-311-Cys-331, Cys-334-Cys-343, and Cys-336-Cys-368. Laminin EGF-like domains lie at 277 to 333 (CICY…ECEE), 334 to 403 (CNCH…PCRP), 404 to 460 (CNCD…NCIP), and 461 to 509 (CDCR…GCSE). Asn-370 is a glycosylation site (N-linked (GlcNAc...) asparagine). Disulfide bonds link Cys-371–Cys-380, Cys-383–Cys-401, Cys-404–Cys-416, Cys-406–Cys-434, Cys-436–Cys-445, Cys-448–Cys-458, Cys-461–Cys-474, Cys-463–Cys-478, Cys-480–Cys-489, and Cys-492–Cys-507. The Laminin EGF-like 5; first part domain maps to 510-519 (CFCFGVSGVC). The 193-residue stretch at 523-715 (TWSISQVTNM…DLAVAADVEH (193 aa)) folds into the Laminin IV type A 1 domain. N-linked (GlcNAc...) asparagine glycosylation is present at Asn-672. In terms of domain architecture, Laminin EGF-like 5; second part spans 716 to 748 (CECPQGYTGTSCEACLPGYYRVDGILFGGICQP). Cystine bridges form between Cys-749–Cys-758, Cys-751–Cys-764, Cys-767–Cys-776, Cys-779–Cys-795, Cys-798–Cys-813, Cys-800–Cys-823, Cys-826–Cys-835, Cys-838–Cys-853, Cys-856–Cys-870, Cys-858–Cys-877, Cys-880–Cys-889, Cys-892–Cys-906, Cys-909–Cys-921, Cys-911–Cys-928, Cys-930–Cys-939, Cys-942–Cys-955, Cys-958–Cys-970, Cys-960–Cys-976, Cys-978–Cys-987, Cys-990–Cys-1002, Cys-1005–Cys-1014, Cys-1007–Cys-1021, Cys-1023–Cys-1032, Cys-1035–Cys-1048, Cys-1051–Cys-1063, Cys-1053–Cys-1070, Cys-1072–Cys-1081, Cys-1084–Cys-1094, Cys-1097–Cys-1109, Cys-1099–Cys-1125, Cys-1127–Cys-1136, and Cys-1139–Cys-1154. Laminin EGF-like domains follow at residues 749–797 (CECH…DCQP), 798–855 (CACP…TCVP), 856–908 (CNCS…NCRA), 909–957 (CDCH…GCVP), 958–1004 (CNCS…GCTP), 1005–1050 (CDCA…GCQA), 1051–1096 (CNCS…DCVP), and 1097–1156 (CGCD…GCSP). The short motif at 1147–1149 (RGD) is the Cell attachment site element. The Laminin EGF-like 14; first part domain maps to 1157–1166 (CFCFGLSQLC). One can recognise a Laminin IV type A 2 domain in the interval 1177–1368 (ITLASDQPLL…EGEAALLLEL (192 aa)). N-linked (GlcNAc...) asparagine glycosylation is present at Asn-1344. Positions 1369–1409 (CVCPPGTAGHSCQDCAPGYYREKLPESGGRGPRPLLAPCVP) constitute a Laminin EGF-like 14; second part domain. 12 disulfide bridges follow: Cys-1410/Cys-1419, Cys-1412/Cys-1426, Cys-1429/Cys-1438, Cys-1441/Cys-1456, Cys-1459/Cys-1473, Cys-1461/Cys-1483, Cys-1486/Cys-1495, Cys-1498/Cys-1513, Cys-1516/Cys-1528, Cys-1518/Cys-1535, Cys-1537/Cys-1546, and Cys-1549/Cys-1560. Laminin EGF-like domains are found at residues 1410 to 1458 (CNCN…DCTP), 1459 to 1515 (CTCP…SCQT), and 1516 to 1562 (CDCN…DCVS). Residues 1564–2123 (DDDCVGPLLN…SRARKQVASI (560 aa)) form a domain II and I region. The stretch at 1617–1691 (AKKIRAEIQL…VATLNQTARK (75 aa)) forms a coiled coil. Asn-1659, Asn-1686, Asn-1718, Asn-1725, Asn-1763, and Asn-1811 each carry an N-linked (GlcNAc...) asparagine glycan. The stretch at 1723–1809 (QQNATLELKA…QEKKLRVQEE (87 aa)) forms a coiled coil. The stretch at 1868-1901 (KRRARDLVHRAEQHASELQSRAGALDRDLENVRN) forms a coiled coil. 4 N-linked (GlcNAc...) asparagine glycosylation sites follow: Asn-1935, Asn-2026, Asn-2045, and Asn-2066. 5 consecutive Laminin G-like domains span residues 2124–2304 (KVAV…CNGC), 2312–2488 (DSSF…RKGC), 2493–2679 (IQSV…LDTC), 2721–2893 (AHQF…VDRC), and 2898–3078 (QEGT…PHSC). Cys-2278 and Cys-2304 are disulfide-bonded. N-linked (GlcNAc...) asparagine glycosylation occurs at Asn-2355. 2 disulfides stabilise this stretch: Cys-2464–Cys-2488 and Cys-2652–Cys-2679. An N-linked (GlcNAc...) asparagine glycan is attached at Asn-2834. Cys-2868 and Cys-2893 are joined by a disulfide. Residue Asn-2923 is glycosylated (N-linked (GlcNAc...) asparagine). Cys-3047 and Cys-3078 form a disulfide bridge.

Laminin is a complex glycoprotein, consisting of three different polypeptide chains (alpha, beta, gamma), which are bound to each other by disulfide bonds into a cross-shaped molecule comprising one long and three short arms with globules at each end. Alpha-1 is a subunit of laminin-1 (laminin-111 or EHS laminin) and laminin-3 (laminin-121 or S-laminin). In terms of processing, tyrosine phosphorylated by PKDCC/VLK.

It localises to the secreted. Its subcellular location is the extracellular space. The protein resides in the extracellular matrix. It is found in the basement membrane. Binding to cells via a high affinity receptor, laminin is thought to mediate the attachment, migration and organization of cells into tissues during embryonic development by interacting with other extracellular matrix components. In Mus musculus (Mouse), this protein is Laminin subunit alpha-1 (Lama1).